The chain runs to 416 residues: uncharacterized protein (416 aa).

9 helical membrane passes run 5–25 (LFLI…ILSL), 84–104 (ISGL…LKHV), 128–148 (AYVP…LFSI), 160–180 (LAFL…YLLW), 192–212 (VLLF…KFGF), 237–257 (PIYF…PVFL), 263–283 (FDKR…FYSL), 288–308 (LHHY…FYLT), and 312–332 (IKYA…GVYI).

Belongs to the glycosyltransferase 83 family.

The protein localises to the cell membrane. This is an uncharacterized protein from Aquifex aeolicus (strain VF5).